The chain runs to 283 residues: Cytosolic Fe-S cluster assembly factor CFD1 (283 aa).

An ATP-binding site is contributed by 26–33 (GKGGVGKS). [4Fe-4S] cluster is bound by residues cysteine 202 and cysteine 205.

Belongs to the Mrp/NBP35 ATP-binding proteins family. NUBP2/CFD1 subfamily. As to quaternary structure, heterotetramer of 2 NBP35 and 2 CFD1 chains. The cofactor is [4Fe-4S] cluster.

The protein resides in the cytoplasm. Its function is as follows. Component of the cytosolic iron-sulfur (Fe/S) protein assembly (CIA) machinery. Required for maturation of extramitochondrial Fe-S proteins. The NBP35-CFD1 heterotetramer forms a Fe-S scaffold complex, mediating the de novo assembly of an Fe-S cluster and its transfer to target apoproteins. Required for biogenesis and export of both ribosomal subunits, which may reflect a role in assembly of the Fe/S clusters in RLI1, a protein which performs rRNA processing and ribosome export. The polypeptide is Cytosolic Fe-S cluster assembly factor CFD1 (Kluyveromyces lactis (strain ATCC 8585 / CBS 2359 / DSM 70799 / NBRC 1267 / NRRL Y-1140 / WM37) (Yeast)).